Here is a 436-residue protein sequence, read N- to C-terminus: Glutamyl-tRNA reductase (436 aa).

Residues 49-52, S109, 114-116, and Q120 each bind substrate; these read TCNR and EGQ. The active-site Nucleophile is the C50. 198 to 203 is an NADP(+) binding site; that stretch reads GAGRMS.

This sequence belongs to the glutamyl-tRNA reductase family. As to quaternary structure, homodimer.

The enzyme catalyses (S)-4-amino-5-oxopentanoate + tRNA(Glu) + NADP(+) = L-glutamyl-tRNA(Glu) + NADPH + H(+). It functions in the pathway porphyrin-containing compound metabolism; protoporphyrin-IX biosynthesis; 5-aminolevulinate from L-glutamyl-tRNA(Glu): step 1/2. Its pathway is porphyrin-containing compound metabolism; chlorophyll biosynthesis. Catalyzes the NADPH-dependent reduction of glutamyl-tRNA(Glu) to glutamate 1-semialdehyde (GSA). The polypeptide is Glutamyl-tRNA reductase (Prochlorococcus marinus (strain MIT 9313)).